The primary structure comprises 189 residues: Peptidyl-tRNA hydrolase (189 aa).

Y15 is a tRNA binding site. Catalysis depends on H20, which acts as the Proton acceptor. 3 residues coordinate tRNA: Y67, N69, and N115.

The protein belongs to the PTH family. In terms of assembly, monomer.

The protein localises to the cytoplasm. The enzyme catalyses an N-acyl-L-alpha-aminoacyl-tRNA + H2O = an N-acyl-L-amino acid + a tRNA + H(+). In terms of biological role, hydrolyzes ribosome-free peptidyl-tRNAs (with 1 or more amino acids incorporated), which drop off the ribosome during protein synthesis, or as a result of ribosome stalling. Functionally, catalyzes the release of premature peptidyl moieties from peptidyl-tRNA molecules trapped in stalled 50S ribosomal subunits, and thus maintains levels of free tRNAs and 50S ribosomes. The sequence is that of Peptidyl-tRNA hydrolase from Symbiobacterium thermophilum (strain DSM 24528 / JCM 14929 / IAM 14863 / T).